We begin with the raw amino-acid sequence, 187 residues long: MIDSANRADVFLRKPAPVAPELQHEVEQFYYWEAKLLNDRRFEEWFALLAEDIHYFMPIRTTRIMRDSRLEYSGSREYAHFDDDATMMKGRLRKITSDVSWSENPASRTRHLVSNVMIVGAEAEGEYEISSAFIVYRNRLERQLDIFAGERRDTLRRNTSEAGFEIVNRTILIDQSTILANNLSFFF.

The protein belongs to the bacterial ring-hydroxylating dioxygenase beta subunit family. This dioxygenase system consists of four proteins: the two subunits of the hydroxylase component (BnzA and BnzB), a ferredoxin (BnzC) and a ferredoxin reductase (BnzD). Requires [2Fe-2S] cluster as cofactor. The cofactor is Fe cation.

The catalysed reaction is benzene + NADH + O2 + H(+) = cis-1,2-dihydrobenzene-1,2-diol + NAD(+). It carries out the reaction toluene + NADH + O2 + H(+) = (1S,2R)-3-methylcyclohexa-3,5-diene-1,2-diol + NAD(+). It functions in the pathway aromatic compound metabolism; benzene degradation; catechol from benzene: step 1/2. The protein operates within xenobiotic degradation; toluene degradation. It participates in xenobiotic degradation; xylene degradation. Functionally, catalyzes both the oxidation of benzene and toluene. The beta subunit may be responsible for the substrate specificity of the enzyme. This Pseudomonas putida (strain ATCC 700007 / DSM 6899 / JCM 31910 / BCRC 17059 / LMG 24140 / F1) protein is Benzene 1,2-dioxygenase subunit beta (bnzB).